Reading from the N-terminus, the 191-residue chain is MGKKLVMAQKRGETRALCLGVAMVMCAVITYYILGTTMLPLYQKSVWTQESLCRLIETNIRDQEELEGKKVPQYPCLWVNVSAVGKWAVLYHTEETRDRNQQCSYIPGSLDNYQMALADVEKVRAKFHERQVFYCFSTTQENETSVLYQRLYGPQALLASLFWPTFLLTGGLLIIAMVKINRSLSILAAQK.

Residues 1–15 (MGKKLVMAQKRGETR) lie on the Cytoplasmic side of the membrane. A helical transmembrane segment spans residues 16-36 (ALCLGVAMVMCAVITYYILGT). Topologically, residues 37–157 (TMLPLYQKSV…YQRLYGPQAL (121 aa)) are extracellular. 2 N-linked (GlcNAc...) asparagine glycosylation sites follow: Asn80 and Asn142. The chain crosses the membrane as a helical span at residues 158–178 (LASLFWPTFLLTGGLLIIAMV). Residues 179–191 (KINRSLSILAAQK) are Cytoplasmic-facing.

It belongs to the KCNMB (TC 8.A.14.1) family. KCNMB1 subfamily. As to quaternary structure, interacts with KCNMA1 tetramer. There are probably 4 molecules of KCMNB1 per KCNMA1 tetramer. N-glycosylated.

The protein localises to the membrane. Its function is as follows. Regulatory subunit of the calcium activated potassium KCNMA1 (maxiK) channel. Modulates the calcium sensitivity and gating kinetics of KCNMA1, thereby contributing to KCNMA1 channel diversity. Increases the apparent Ca(2+)/voltage sensitivity of the KCNMA1 channel. It also modifies KCNMA1 channel kinetics and alters its pharmacological properties. It slows down the activation and the deactivation kinetics of the channel. Acts as a negative regulator of smooth muscle contraction by enhancing the calcium sensitivity to KCNMA1. Its presence is also a requirement for internal binding of the KCNMA1 channel opener dehydrosoyasaponin I (DHS-1) triterpene glycoside and for external binding of the agonist hormone 17-beta-estradiol (E2). Increases the binding activity of charybdotoxin (CTX) toxin to KCNMA1 peptide blocker by increasing the CTX association rate and decreasing the dissociation rate. The protein is Calcium-activated potassium channel subunit beta-1 (KCNMB1) of Oryctolagus cuniculus (Rabbit).